The primary structure comprises 397 residues: Elongation factor Tu-2 (397 aa).

The region spanning 10–206 (KPHVNIGTIG…AVDEFVPEPV (197 aa)) is the tr-type G domain. The tract at residues 19–26 (GHIDHGKT) is G1. A GTP-binding site is contributed by 19-26 (GHIDHGKT). Residue threonine 26 participates in Mg(2+) binding. The segment at 62 to 66 (GITIS) is G2. Positions 83–86 (DCPG) are G3. Residues 83–87 (DCPGH) and 138–141 (NKTD) each bind GTP. The G4 stretch occupies residues 138-141 (NKTD). The tract at residues 176–178 (SAL) is G5.

Belongs to the TRAFAC class translation factor GTPase superfamily. Classic translation factor GTPase family. EF-Tu/EF-1A subfamily. As to quaternary structure, monomer.

The protein resides in the cytoplasm. The catalysed reaction is GTP + H2O = GDP + phosphate + H(+). Its function is as follows. GTP hydrolase that promotes the GTP-dependent binding of aminoacyl-tRNA to the A-site of ribosomes during protein biosynthesis. The chain is Elongation factor Tu-2 from Streptomyces ramocissimus.